We begin with the raw amino-acid sequence, 257 residues long: Dihydroorotate dehydrogenase B (NAD(+)), electron transfer subunit (257 aa).

The FAD-binding FR-type domain occupies 2 to 100 (ILIEDLTVVS…MGPQGNGFDI (99 aa)). FAD-binding positions include 51–54 (RPIS), 68–70 (VYR), and 75–76 (GT). 4 residues coordinate [2Fe-2S] cluster: cysteine 220, cysteine 225, cysteine 228, and cysteine 244.

The protein belongs to the PyrK family. Heterotetramer of 2 PyrK and 2 PyrD type B subunits. It depends on [2Fe-2S] cluster as a cofactor. The cofactor is FAD.

Its pathway is pyrimidine metabolism; UMP biosynthesis via de novo pathway; orotate from (S)-dihydroorotate (NAD(+) route): step 1/1. In terms of biological role, responsible for channeling the electrons from the oxidation of dihydroorotate from the FMN redox center in the PyrD type B subunit to the ultimate electron acceptor NAD(+). This chain is Dihydroorotate dehydrogenase B (NAD(+)), electron transfer subunit, found in Streptococcus thermophilus (strain ATCC BAA-491 / LMD-9).